Consider the following 284-residue polypeptide: CUE domain-containing protein 2 (284 aa).

A CUE domain is found at 141-184 (EELPGVDVLLEVFPTCSMEQAQWVLAKARGDLEEAVHMLVEGKE). A disordered region spans residues 183 to 204 (KEEGPPGWDGPSQDLPRRLRGP).

The protein belongs to the CUEDC2 family. Interacts with PGR and ESR1.

The protein resides in the cytoplasm. It localises to the nucleus. Controls PGR and ESR1 protein levels through their targeting for ubiquitination and subsequent proteasomal degradation. This Mus musculus (Mouse) protein is CUE domain-containing protein 2 (Cuedc2).